A 249-amino-acid chain; its full sequence is ATP synthase subunits region ORF 6 (249 aa).

The polypeptide is ATP synthase subunits region ORF 6 (Fuscovulum blasticum (Rhodobacter blasticus)).